Consider the following 240-residue polypeptide: ATP-dependent dethiobiotin synthetase BioD (240 aa).

15 to 20 (EIGKTF) contributes to the ATP binding site. Thr-19 is a binding site for Mg(2+). Lys-40 is a catalytic residue. ATP contacts are provided by residues Asp-57, 118–121 (EGVG), and 178–179 (NR). Residues Asp-57 and Glu-118 each coordinate Mg(2+).

It belongs to the dethiobiotin synthetase family. In terms of assembly, homodimer. Mg(2+) serves as cofactor.

Its subcellular location is the cytoplasm. It catalyses the reaction (7R,8S)-7,8-diammoniononanoate + CO2 + ATP = (4R,5S)-dethiobiotin + ADP + phosphate + 3 H(+). Its pathway is cofactor biosynthesis; biotin biosynthesis; biotin from 7,8-diaminononanoate: step 1/2. In terms of biological role, catalyzes a mechanistically unusual reaction, the ATP-dependent insertion of CO2 between the N7 and N8 nitrogen atoms of 7,8-diaminopelargonic acid (DAPA, also called 7,8-diammoniononanoate) to form a ureido ring. The chain is ATP-dependent dethiobiotin synthetase BioD from Burkholderia pseudomallei (strain 1106a).